The primary structure comprises 1042 residues: MPSQVLTHEEEYDLAVRQGKGLAQQFFDHAFLNPSAMAVIDGDTNLTYQDLHERAAMLARELQRGNLHTEEPVGVVVQHGISDVVAQMAILYAAGTCVPMDPTLPDLQIKGRLDRLKARYILVDRANQHRDLPFHPLIVDDSSASFSKSSHVRDNEEPMQITLEHRTHIIHTSGTTSEPKAVQIAARSILQVVFHAPFEPLYPTDRVAHVNNSSFDVSLFDIWAPLLRGACIVVVSKVTLLDLETLAAYIDRQGITVMATTTAILNLAASVYPRAFEKLRLCFIGGEAANISAIETIFQAGPPTQLINAYGPTECCIFCLAHRVTIADVQAGVVSIGKPIGRTVAYICDEAGRPVPDGHEGELLIGGAGVSPGYINQPDKNRASFVAIEGSDCQRFYRTGDIVRRRVSNGQIDYVGRRDHQVKVRGFRIELEAVESAIMKTGQFSEAVALKVEAGSEGAGSILVAFAVALSGTKPHAVLSAVDMLKAVLPDYMVPKIELISKMPVNSHAKVDRKYLQQLFRNRWAEQHIDMDNEDSTRGKLANLWASILGVPVPASNDNADFFLLGATSMQASLLISRIQKTFNVQVSLLTLYDNSSLIRLAGILEERILGTQESFCKESERHMWLEDSKLADSLVPPSDPPVDWCRDTEGRVFLTGATGFVGSFLLADLLRQPNVHQVGCLVRAVDPATGLRRLQNGLAKYDLWEDQFRYKLLPLCGTLEDRYLGLGPDRFEEIAHWASVIFHLGARVNYTQPYSLHRPANVQGTVNVLRLACAGRSKVLHYVSSISCFGPTGFITGTRTVMENEPLPRHLEALPYDHGYAQSQWVVENMLQRLMDNGFPIVVYRPGFITGHSQTGACNPDDFLSRLIIACGEMGSYPLLPNQRKEFVPVDYVNAVILHIASSTATAVGRVYHIVPPNRDLSLDMNDSMELVGSLAEGNESSVRGVSYQQWVQELDRQSPERLRPLQPMLTEKLYQGLTRWELYENMPVYDTTNTRQALESYPGGLKFPVLDSELMQKYIRYLQIRSASPKEENPLNGTDS.

Residues 29–425 (HAFLNPSAMA…GRRDHQVKVR (397 aa)) are adenylation (A) domain. The 78-residue stretch at 532 to 609 (DNEDSTRGKL…RLAGILEERI (78 aa)) folds into the Carrier domain. An O-(pantetheine 4'-phosphoryl)serine modification is found at S569. The short-chain dehydrogenase/reductase (R) domain stretch occupies residues 655–897 (LTGATGFVGS…FVPVDYVNAV (243 aa)).

It belongs to the NRP synthetase family.

It carries out the reaction L-tyrosinal + AMP + diphosphate + NADP(+) = L-tyrosine + ATP + NADPH + H(+). It functions in the pathway secondary metabolite biosynthesis. Functionally, non-canonical nonribosomal peptide synthetase; part of the lna gene cluster that mediates the biosynthesis of diastereomeric piperazines. Lna and lnb clusters encode sets of enzymes that produce overlapping sets of previously undescribed metabolites such as piperazinomycin-like metabolites or morpholine. The lna and lnb biosynthetic pathways appear to be part of a signaling network that controls the formation of sclerotia, a resilient overwintering structure. One primary function of the non-canonical nonribosomal peptide synthetases lnaA and lnbA consists in the reduction of L-tyrosine. The presence in the clusters of tailoring enzymes such as the oxidoreductases lnaB, lnbB, lnaE or lnbE, as well as of the cytochrome P450 monooxygenases lnaC, lnaD, or lnbC, might explain formation of various diastereomeric piperazines. The polypeptide is Aldehyde reductase lnaA (Aspergillus flavus (strain ATCC 200026 / FGSC A1120 / IAM 13836 / NRRL 3357 / JCM 12722 / SRRC 167)).